The chain runs to 149 residues: UPF0178 protein Mmwyl1_2258 (149 aa).

Belongs to the UPF0178 family.

This chain is UPF0178 protein Mmwyl1_2258, found in Marinomonas sp. (strain MWYL1).